A 278-amino-acid polypeptide reads, in one-letter code: Urease accessory protein UreD (278 aa).

It belongs to the UreD family. UreD, UreF and UreG form a complex that acts as a GTP-hydrolysis-dependent molecular chaperone, activating the urease apoprotein by helping to assemble the nickel containing metallocenter of UreC. The UreE protein probably delivers the nickel.

Its subcellular location is the cytoplasm. Functionally, required for maturation of urease via the functional incorporation of the urease nickel metallocenter. This is Urease accessory protein UreD from Leptothrix cholodnii (strain ATCC 51168 / LMG 8142 / SP-6) (Leptothrix discophora (strain SP-6)).